The chain runs to 467 residues: tRNA(Ile)-lysidine synthase (467 aa).

35–40 (SGGPDS) contacts ATP.

This sequence belongs to the tRNA(Ile)-lysidine synthase family.

It localises to the cytoplasm. The catalysed reaction is cytidine(34) in tRNA(Ile2) + L-lysine + ATP = lysidine(34) in tRNA(Ile2) + AMP + diphosphate + H(+). Its function is as follows. Ligates lysine onto the cytidine present at position 34 of the AUA codon-specific tRNA(Ile) that contains the anticodon CAU, in an ATP-dependent manner. Cytidine is converted to lysidine, thus changing the amino acid specificity of the tRNA from methionine to isoleucine. The sequence is that of tRNA(Ile)-lysidine synthase from Caldanaerobacter subterraneus subsp. tengcongensis (strain DSM 15242 / JCM 11007 / NBRC 100824 / MB4) (Thermoanaerobacter tengcongensis).